The primary structure comprises 287 residues: 3-methyl-2-oxobutanoate hydroxymethyltransferase (287 aa).

Aspartate 57 and aspartate 96 together coordinate Mg(2+). 3-methyl-2-oxobutanoate contacts are provided by residues 57–58 (DS), aspartate 96, and lysine 125. Glutamate 127 lines the Mg(2+) pocket. Glutamate 194 (proton acceptor) is an active-site residue.

This sequence belongs to the PanB family. Homodecamer; pentamer of dimers. It depends on Mg(2+) as a cofactor.

It is found in the cytoplasm. The enzyme catalyses 3-methyl-2-oxobutanoate + (6R)-5,10-methylene-5,6,7,8-tetrahydrofolate + H2O = 2-dehydropantoate + (6S)-5,6,7,8-tetrahydrofolate. Its pathway is cofactor biosynthesis; (R)-pantothenate biosynthesis; (R)-pantoate from 3-methyl-2-oxobutanoate: step 1/2. Catalyzes the reversible reaction in which hydroxymethyl group from 5,10-methylenetetrahydrofolate is transferred onto alpha-ketoisovalerate to form ketopantoate. The polypeptide is 3-methyl-2-oxobutanoate hydroxymethyltransferase (Methylobacterium sp. (strain 4-46)).